The chain runs to 241 residues: Pyridoxine 5'-phosphate synthase (241 aa).

N7 is a binding site for 3-amino-2-oxopropyl phosphate. A 1-deoxy-D-xylulose 5-phosphate-binding site is contributed by 9-10 (DH). R18 serves as a coordination point for 3-amino-2-oxopropyl phosphate. H43 acts as the Proton acceptor in catalysis. 1-deoxy-D-xylulose 5-phosphate contacts are provided by R45 and H50. E70 functions as the Proton acceptor in the catalytic mechanism. 1-deoxy-D-xylulose 5-phosphate is bound at residue T100. The active-site Proton donor is the H191. Residues G192 and 213-214 (GH) each bind 3-amino-2-oxopropyl phosphate.

The protein belongs to the PNP synthase family. As to quaternary structure, homooctamer; tetramer of dimers.

The protein resides in the cytoplasm. The catalysed reaction is 3-amino-2-oxopropyl phosphate + 1-deoxy-D-xylulose 5-phosphate = pyridoxine 5'-phosphate + phosphate + 2 H2O + H(+). It functions in the pathway cofactor biosynthesis; pyridoxine 5'-phosphate biosynthesis; pyridoxine 5'-phosphate from D-erythrose 4-phosphate: step 5/5. Functionally, catalyzes the complicated ring closure reaction between the two acyclic compounds 1-deoxy-D-xylulose-5-phosphate (DXP) and 3-amino-2-oxopropyl phosphate (1-amino-acetone-3-phosphate or AAP) to form pyridoxine 5'-phosphate (PNP) and inorganic phosphate. This is Pyridoxine 5'-phosphate synthase from Acidithiobacillus ferrooxidans (strain ATCC 23270 / DSM 14882 / CIP 104768 / NCIMB 8455) (Ferrobacillus ferrooxidans (strain ATCC 23270)).